A 414-amino-acid polypeptide reads, in one-letter code: Gamma-glutamyl phosphate reductase (414 aa).

This sequence belongs to the gamma-glutamyl phosphate reductase family.

It localises to the cytoplasm. It catalyses the reaction L-glutamate 5-semialdehyde + phosphate + NADP(+) = L-glutamyl 5-phosphate + NADPH + H(+). Its pathway is amino-acid biosynthesis; L-proline biosynthesis; L-glutamate 5-semialdehyde from L-glutamate: step 2/2. Functionally, catalyzes the NADPH-dependent reduction of L-glutamate 5-phosphate into L-glutamate 5-semialdehyde and phosphate. The product spontaneously undergoes cyclization to form 1-pyrroline-5-carboxylate. The sequence is that of Gamma-glutamyl phosphate reductase from Alkaliphilus metalliredigens (strain QYMF).